The primary structure comprises 130 residues: Protein lgg-2 (130 aa).

Glycine 130 carries Phosphatidylethanolamine amidated glycine lipidation.

This sequence belongs to the ATG8 family. May interact with vps-39. Interacts with lgg-3; the interaction is direct. Interacts with atg-16.1 (via WD domain) and atg-16.2 (via WD 5-6 repeats); the interactions are direct. Interacts with sepa-1 (via the LIR motifs); the interaction is direct. Interacts with sqst-1 (via the LIR motifs); the interaction is direct. Interacts with epg-2 (via the LIR motifs); the interaction is weak. Interacts with atg-7; the interaction is direct. Interacts with atg-3. The interaction with atg-7 and atg-3 may be required for the lipidation of lgg-2. In terms of processing, this protein is subject to lipidation. Lipidation is regulated by lgg-1.

It localises to the cytoplasmic vesicle. It is found in the autophagosome. The protein localises to the cytoplasm. Its subcellular location is the cell membrane. In terms of biological role, ubiquitin-like modifier involved in the formation of autophagosomal vacuoles (autophagosomes). When lipidated mediates tethering between adjacent membranes and stimulates membrane fusion. Less effective at promoting membrane fusion than lgg-1. Acts upstream of the autophagy protein epg-5 in the aggrephagy pathway, which is the macroautophagic degradation of ubiquitinated protein aggregates, and preferentially interacts with autophagy proteins and substrates containing LIR motifs to mediate autophagosome formation and protein aggregate degradation. In particular binds to components of an atg-5-lgg-3-atg-16 complex to regulate autophagosome formation and cargo sequestration. Required for the degradation of specific sqst-1-containing aggregates during embryogenesis and the early stages of larval development. Involved in allophagy, which is an autophagic process in which paternal mitochondria and organelles are degraded during fertilization, and moreover is required for the degradation of lgg-1-positive allophagic autophagosomes in embryos. Involved in xenophagy, the autophagy-mediated degradation of pathogens and pathogen products, such as toxins. Also plays a role in membrane-pore repair. Through HOPS complex subunit vps-39, tethers lysosomes with autophagosomes to form autolysosomes. Plays a role in the distribution and clearance of germ cell specific P-granules from somatic cells to ensure exclusive localization of the P-granules in germ cells. Essential for dauer development and life-span extension. The sequence is that of Protein lgg-2 from Caenorhabditis elegans.